A 278-amino-acid chain; its full sequence is Pantothenate synthetase (278 aa).

31–38 (MGALHEGH) provides a ligand contact to ATP. The Proton donor role is filled by His38. Gln62 is a (R)-pantoate binding site. Gln62 provides a ligand contact to beta-alanine. 148–151 (GEKD) serves as a coordination point for ATP. (R)-pantoate is bound at residue Gln154. Residues Leu177 and 185–188 (MSSR) contribute to the ATP site.

Belongs to the pantothenate synthetase family. As to quaternary structure, homodimer.

Its subcellular location is the cytoplasm. The catalysed reaction is (R)-pantoate + beta-alanine + ATP = (R)-pantothenate + AMP + diphosphate + H(+). It functions in the pathway cofactor biosynthesis; (R)-pantothenate biosynthesis; (R)-pantothenate from (R)-pantoate and beta-alanine: step 1/1. Catalyzes the condensation of pantoate with beta-alanine in an ATP-dependent reaction via a pantoyl-adenylate intermediate. This chain is Pantothenate synthetase, found in Acidiphilium cryptum (strain JF-5).